Here is a 339-residue protein sequence, read N- to C-terminus: Dihydroorotate dehydrogenase (quinone) (339 aa).

FMN-binding positions include 64 to 68 (AGADK) and Thr-88. A substrate-binding site is contributed by Lys-68. 113–117 (NRNGF) lines the substrate pocket. 2 residues coordinate FMN: Asn-141 and Asn-174. Asn-174 serves as a coordination point for substrate. Ser-177 (nucleophile) is an active-site residue. Asn-179 lines the substrate pocket. Lys-219 and Thr-247 together coordinate FMN. Substrate is bound at residue 248–249 (NT). FMN is bound by residues Gly-270, Gly-299, and 320-321 (YS).

This sequence belongs to the dihydroorotate dehydrogenase family. Type 2 subfamily. Monomer. FMN serves as cofactor.

The protein resides in the cell membrane. It catalyses the reaction (S)-dihydroorotate + a quinone = orotate + a quinol. It participates in pyrimidine metabolism; UMP biosynthesis via de novo pathway; orotate from (S)-dihydroorotate (quinone route): step 1/1. Functionally, catalyzes the conversion of dihydroorotate to orotate with quinone as electron acceptor. The sequence is that of Dihydroorotate dehydrogenase (quinone) (pyrD) from Haemophilus influenzae (strain ATCC 51907 / DSM 11121 / KW20 / Rd).